Reading from the N-terminus, the 93-residue chain is UPF0337 protein Bd3330 (93 aa).

This sequence belongs to the UPF0337 (CsbD) family.

This is UPF0337 protein Bd3330 from Bdellovibrio bacteriovorus (strain ATCC 15356 / DSM 50701 / NCIMB 9529 / HD100).